The primary structure comprises 236 residues: Uridylate kinase (236 aa).

10–13 (KLSG) contributes to the ATP binding site. Glycine 52 serves as a coordination point for UMP. ATP is bound by residues glycine 53 and arginine 57. Residues aspartate 72 and 133-140 (TGNPFFTT) each bind UMP. ATP-binding residues include threonine 160, tyrosine 166, and aspartate 169.

The protein belongs to the UMP kinase family. In terms of assembly, homohexamer.

The protein localises to the cytoplasm. The catalysed reaction is UMP + ATP = UDP + ADP. It functions in the pathway pyrimidine metabolism; CTP biosynthesis via de novo pathway; UDP from UMP (UMPK route): step 1/1. Its activity is regulated as follows. Inhibited by UTP. Its function is as follows. Catalyzes the reversible phosphorylation of UMP to UDP. In Cupriavidus necator (strain ATCC 17699 / DSM 428 / KCTC 22496 / NCIMB 10442 / H16 / Stanier 337) (Ralstonia eutropha), this protein is Uridylate kinase.